Consider the following 299-residue polypeptide: tRNA dimethylallyltransferase (299 aa).

10–17 (GATATGKS) lines the ATP pocket. Residue 12 to 17 (TATGKS) participates in substrate binding. Residues 35-38 (DSRQ) are interaction with substrate tRNA.

This sequence belongs to the IPP transferase family. In terms of assembly, monomer. Mg(2+) serves as cofactor.

It carries out the reaction adenosine(37) in tRNA + dimethylallyl diphosphate = N(6)-dimethylallyladenosine(37) in tRNA + diphosphate. Catalyzes the transfer of a dimethylallyl group onto the adenine at position 37 in tRNAs that read codons beginning with uridine, leading to the formation of N6-(dimethylallyl)adenosine (i(6)A). This Rippkaea orientalis (strain PCC 8801 / RF-1) (Cyanothece sp. (strain PCC 8801)) protein is tRNA dimethylallyltransferase.